A 1259-amino-acid polypeptide reads, in one-letter code: Telomerase reverse transcriptase (1259 aa).

The Reverse transcriptase domain occupies arginine 742–isoleucine 1067. Mg(2+) contacts are provided by aspartate 837, aspartate 999, and aspartate 1000.

It belongs to the reverse transcriptase family. Telomerase subfamily. Component of the telomerase ribonucleoprotein complex. In terms of tissue distribution, expressed in shoot apices and immature embryos.

Its subcellular location is the nucleus. The protein resides in the chromosome. It localises to the telomere. It catalyses the reaction DNA(n) + a 2'-deoxyribonucleoside 5'-triphosphate = DNA(n+1) + diphosphate. In terms of biological role, telomerase is a ribonucleoprotein enzyme essential for the replication of chromosome termini in most eukaryotes. It elongates telomeres. It is a reverse transcriptase that adds simple sequence repeats to chromosome ends by copying a template sequence within the RNA component of the enzyme. This is Telomerase reverse transcriptase (TERT) from Oryza sativa subsp. japonica (Rice).